The primary structure comprises 201 residues: GTP cyclohydrolase 1 (201 aa).

The segment at 1-20 (MDATVKKMSPETSRPSREEA) is disordered. Residues C91, H94, and C162 each coordinate Zn(2+).

This sequence belongs to the GTP cyclohydrolase I family. Homomer.

The catalysed reaction is GTP + H2O = 7,8-dihydroneopterin 3'-triphosphate + formate + H(+). Its pathway is cofactor biosynthesis; 7,8-dihydroneopterin triphosphate biosynthesis; 7,8-dihydroneopterin triphosphate from GTP: step 1/1. This chain is GTP cyclohydrolase 1, found in Allorhizobium ampelinum (strain ATCC BAA-846 / DSM 112012 / S4) (Agrobacterium vitis (strain S4)).